Reading from the N-terminus, the 876-residue chain is Alanine--tRNA ligase (876 aa).

4 residues coordinate Zn(2+): His-564, His-568, Cys-666, and His-670.

This sequence belongs to the class-II aminoacyl-tRNA synthetase family. As to quaternary structure, homotetramer. The cofactor is Zn(2+).

The protein localises to the cytoplasm. The catalysed reaction is tRNA(Ala) + L-alanine + ATP = L-alanyl-tRNA(Ala) + AMP + diphosphate. In terms of biological role, catalyzes the attachment of alanine to tRNA(Ala) in a two-step reaction: alanine is first activated by ATP to form Ala-AMP and then transferred to the acceptor end of tRNA(Ala). Also edits incorrectly charged Ser-tRNA(Ala) and Gly-tRNA(Ala) via its editing domain. This chain is Alanine--tRNA ligase, found in Salmonella typhi.